The chain runs to 332 residues: MTTPHSQAQPGLPIDPHPDEYKVAALVFYSCIFIIGLFVNVTALWVFSCTTKKRTTVTVYMMNVALLDLVFIMSLPFRMLYYAKGEWPFGEYFCRILGALTVFYPSIALWLLAFISADRYMAIVQPKYAKELKNTCKAVMACVGVWIMTLTTTIPLLLLYEDPDTASSTPPTCLKISDIIYLKAINALNFTRLIFFFLIPLFIMIGCYLVIIHSLLHGKTSKLKPKVKEKSIRIIITLMVQVLVCFMPFHICFAFLMLGGDENSYNPWGAFTTFLMNLSTCLDVILYYIVSKQFQARVISVMLYRNYLRSVRRKSFRSGSLRSLSNINSEML.

Over 1–26 the chain is Extracellular; it reads MTTPHSQAQPGLPIDPHPDEYKVAAL. A helical transmembrane segment spans residues 27–47; sequence VFYSCIFIIGLFVNVTALWVF. Residues 48 to 56 lie on the Cytoplasmic side of the membrane; sequence SCTTKKRTT. The helical transmembrane segment at 57–77 threads the bilayer; sequence VTVYMMNVALLDLVFIMSLPF. Residues 78–95 lie on the Extracellular side of the membrane; the sequence is RMLYYAKGEWPFGEYFCR. Cys94 and Cys173 form a disulfide bridge. Residues 96 to 116 traverse the membrane as a helical segment; it reads ILGALTVFYPSIALWLLAFIS. Topologically, residues 117 to 138 are cytoplasmic; that stretch reads ADRYMAIVQPKYAKELKNTCKA. The helical transmembrane segment at 139-159 threads the bilayer; the sequence is VMACVGVWIMTLTTTIPLLLL. The Extracellular segment spans residues 160-192; sequence YEDPDTASSTPPTCLKISDIIYLKAINALNFTR. Asn189 carries N-linked (GlcNAc...) asparagine glycosylation. Residues 193–213 form a helical membrane-spanning segment; that stretch reads LIFFFLIPLFIMIGCYLVIIH. The Cytoplasmic segment spans residues 214–233; the sequence is SLLHGKTSKLKPKVKEKSIR. The helical transmembrane segment at 234-254 threads the bilayer; that stretch reads IIITLMVQVLVCFMPFHICFA. Topologically, residues 255-269 are extracellular; the sequence is FLMLGGDENSYNPWG. The helical transmembrane segment at 270–290 threads the bilayer; sequence AFTTFLMNLSTCLDVILYYIV. The Cytoplasmic segment spans residues 291 to 332; it reads SKQFQARVISVMLYRNYLRSVRRKSFRSGSLRSLSNINSEML. Ser323 carries the phosphoserine modification.

It belongs to the G-protein coupled receptor 1 family.

It is found in the cell membrane. The protein resides in the cytoplasmic vesicle membrane. G protein-coupled receptor (GPCR) that plays a role in diverse physiological processes particularly within the immune and nervous systems. Becomes active when triggered by various endogenous ligands including endocannabinoid N-arachidonyl glycine (NAGly), delta-9-tetrahydrocannabinol or resolvin D2/RvD2 derived from the omega-3 fatty acid docosahexaenoic acid (DHA). Upon RvD2 binding, facilitates the resolution of inflammation, aiding in tissue repair and homeostasis. Mechanistically, RvD2 ligation initiates Galphas protein coupling, activation of cAMP-PKA signaling pathway and phosphorylation of STAT3, leading to RvD2-stimulated macrophage phagocytosis. Mediates NAGly-induced process of reorganization of actin filaments and induction of acrosomal exocytosis. Activation by N-arachidonoyl glycine (NAGly) can also induce apoptosis in macrophages. Plays a role in homeostasis of CD8+ subsets of intraepithelial lymphocytes (IELs) (CD8alphaalpha and CD8alphabeta IELs) in small intestine by supporting preferential migration of CD8alphaalpha T-cells to intraepithelial compartment over lamina propria compartment, and by mediating their reconstitution into small intestine after bone marrow transplant. Participates also in hypotensive responses, mediating reduction in intraocular and blood pressure. In Bos taurus (Bovine), this protein is N-arachidonyl glycine receptor (GPR18).